The following is a 118-amino-acid chain: V-type proton ATPase subunit G 1 (118 aa).

Alanine 2 is modified (N-acetylalanine). Residues 19–42 (AEKVSEARKRKNRRLKQAKEEAQA) are disordered.

This sequence belongs to the V-ATPase G subunit family. As to quaternary structure, V-ATPase is a heteromultimeric enzyme made up of two complexes: the ATP-hydrolytic V1 complex and the proton translocation V0 complex. The V1 complex consists of three catalytic AB heterodimers that form a heterohexamer, three peripheral stalks each consisting of EG heterodimers, one central rotor including subunits D and F, and the regulatory subunits C and H. The proton translocation complex V0 consists of the proton transport subunit a, a ring of proteolipid subunits c9c'', rotary subunit d, subunits e and f, and the accessory subunits ATP6AP1/Ac45 and ATP6AP2/PRR. In terms of tissue distribution, brain, heart, kidney and spleen.

The protein localises to the apical cell membrane. Functionally, subunit of the V1 complex of vacuolar(H+)-ATPase (V-ATPase), a multisubunit enzyme composed of a peripheral complex (V1) that hydrolyzes ATP and a membrane integral complex (V0) that translocates protons. V-ATPase is responsible for acidifying and maintaining the pH of intracellular compartments and in some cell types, is targeted to the plasma membrane, where it is responsible for acidifying the extracellular environment. In aerobic conditions, involved in intracellular iron homeostasis, thus triggering the activity of Fe(2+) prolyl hydroxylase (PHD) enzymes, and leading to HIF1A hydroxylation and subsequent proteasomal degradation. The chain is V-type proton ATPase subunit G 1 (ATP6V1G1) from Bos taurus (Bovine).